The chain runs to 112 residues: T cell receptor alpha variable 30 (112 aa).

An N-terminal signal peptide occupies residues 1 to 21 (METLLKVLSGTLLWQLTWVRS). Residues 24 to 112 (PVQSPQAVIL…YSGTYFCGTE (89 aa)) form the Ig-like domain. N42 carries N-linked (GlcNAc...) asparagine glycosylation. C43 and C109 form a disulfide bridge.

In terms of assembly, alpha-beta TR is a heterodimer composed of an alpha and beta chain; disulfide-linked. The alpha-beta TR is associated with the transmembrane signaling CD3 coreceptor proteins to form the TR-CD3 (TcR or TCR). The assembly of alpha-beta TR heterodimers with CD3 occurs in the endoplasmic reticulum where a single alpha-beta TR heterodimer associates with one CD3D-CD3E heterodimer, one CD3G-CD3E heterodimer and one CD247 homodimer forming a stable octameric structure. CD3D-CD3E and CD3G-CD3E heterodimers preferentially associate with TR alpha and TR beta chains, respectively. The association of the CD247 homodimer is the last step of TcR assembly in the endoplasmic reticulum and is required for transport to the cell surface.

The protein resides in the cell membrane. In terms of biological role, v region of the variable domain of T cell receptor (TR) alpha chain that participates in the antigen recognition. Alpha-beta T cell receptors are antigen specific receptors which are essential to the immune response and are present on the cell surface of T lymphocytes. Recognize peptide-major histocompatibility (MH) (pMH) complexes that are displayed by antigen presenting cells (APC), a prerequisite for efficient T cell adaptive immunity against pathogens. Binding of alpha-beta TR to pMH complex initiates TR-CD3 clustering on the cell surface and intracellular activation of LCK that phosphorylates the ITAM motifs of CD3G, CD3D, CD3E and CD247 enabling the recruitment of ZAP70. In turn ZAP70 phosphorylates LAT, which recruits numerous signaling molecules to form the LAT signalosome. The LAT signalosome propagates signal branching to three major signaling pathways, the calcium, the mitogen-activated protein kinase (MAPK) kinase and the nuclear factor NF-kappa-B (NF-kB) pathways, leading to the mobilization of transcription factors that are critical for gene expression and essential for T cell growth and differentiation. The T cell repertoire is generated in the thymus, by V-(D)-J rearrangement. This repertoire is then shaped by intrathymic selection events to generate a peripheral T cell pool of self-MH restricted, non-autoaggressive T cells. Post-thymic interaction of alpha-beta TR with the pMH complexes shapes TR structural and functional avidity. This Homo sapiens (Human) protein is T cell receptor alpha variable 30.